A 594-amino-acid chain; its full sequence is Spindle pole body-associated protein CIK1 (594 aa).

The segment at 1–29 (MNNSKIPKLSFHSDPNNVTRDFPKTKRQK) is disordered. Residues 81–360 (IERVKNNERK…VNELEKVQQE (280 aa)) adopt a coiled-coil conformation.

In terms of assembly, interacts with KAR3; the interaction is direct.

The protein resides in the nucleus. Its subcellular location is the cytoplasm. It is found in the cytoskeleton. It localises to the microtubule organizing center. The protein localises to the spindle pole body. The protein resides in the spindle. Functionally, together with the minus end-directed microtubule motor KAR3, involved in spindle midzone assembly, karyogamy (nuclear fusion) during mating, and with an essential function in meiosis I. To contribute to spindle midzone assembly during mitotic metaphase, the KAR3-CIK1 motor cross-links anti-parallel microtubules to align them on the spindle axis; as the motor travels polewards splayed microtubules are pulled into alignment. During the karyogamy (nuclear fusion) step of mating, KAR3-CIK1 cross-links antiparallel cytoplasmic microtubules emanating from the spindle pole bodies of mating partners; the motor activity of KAR3 creates the force that pulls the nuclei together by sliding cross-linked microtubules past one another. KAR3-CIK1 promotes microtubule shortening predominantly from the microtubule plus-end. Required for interhomolog recombination, synapsis of homologous chromosomes and establishment of a meiosis I spindle. This is Spindle pole body-associated protein CIK1 (CIK1) from Saccharomyces cerevisiae (strain ATCC 204508 / S288c) (Baker's yeast).